The sequence spans 474 residues: Glutamate--tRNA ligase (474 aa).

Residues 9–19 (PSPTGYLHVGG) carry the 'HIGH' region motif. The 'KMSKS' region motif lies at 240–244 (KLSKR). K243 serves as a coordination point for ATP.

This sequence belongs to the class-I aminoacyl-tRNA synthetase family. Glutamate--tRNA ligase type 1 subfamily. As to quaternary structure, monomer.

It localises to the cytoplasm. It catalyses the reaction tRNA(Glu) + L-glutamate + ATP = L-glutamyl-tRNA(Glu) + AMP + diphosphate. Its function is as follows. Catalyzes the attachment of glutamate to tRNA(Glu) in a two-step reaction: glutamate is first activated by ATP to form Glu-AMP and then transferred to the acceptor end of tRNA(Glu). The polypeptide is Glutamate--tRNA ligase (Aliivibrio salmonicida (strain LFI1238) (Vibrio salmonicida (strain LFI1238))).